Here is a 302-residue protein sequence, read N- to C-terminus: MSTKFNVKTFQGMILALQEYWANQGCTIVQPFDMEVGAGTSHPMTALRALGPEPMAFAYVQPSRRPTDGRYGENPNRLQHYYQFQVVIKPSPDNIQELYLGSLEMLGFDPTKNDIRFVEDNWENPTLGAWGLGWEVWLNGMEVTQFTYFQQVGGLECKPVTGEVTYGLERLAMYIQGVDSVYDLVWSDGPLGKTTYGDVFHQNEVEQSTYNFEHANTDFLFYCFDQYEKEAQELLALEKPLPLPAYERILKAAHSFNLLDARKAISVTERQRYILRIRALTKGVAEAYYASREALGFPGCKK.

It belongs to the class-II aminoacyl-tRNA synthetase family. Tetramer of two alpha and two beta subunits.

The protein localises to the cytoplasm. The catalysed reaction is tRNA(Gly) + glycine + ATP = glycyl-tRNA(Gly) + AMP + diphosphate. This Haemophilus influenzae (strain ATCC 51907 / DSM 11121 / KW20 / Rd) protein is Glycine--tRNA ligase alpha subunit (glyQ).